The sequence spans 661 residues: UvrABC system protein B (661 aa).

The Helicase ATP-binding domain maps to 25 to 178 (EGILKGEKFQ…DEVIRDLIRM (154 aa)). 38–45 (GVTGSGKT) contacts ATP. The Beta-hairpin motif lies at 91–114 (YYDYYQPEAYIPETDTYIEKDSSI). In terms of domain architecture, Helicase C-terminal spans 429–591 (QIDHLIGEIR…IVPQTVRKGI (163 aa)). The 36-residue stretch at 625 to 660 (EEYIKELEQEMKKLAIELEFEKAAKVRDKIFELKKL) folds into the UVR domain.

It belongs to the UvrB family. As to quaternary structure, forms a heterotetramer with UvrA during the search for lesions. Interacts with UvrC in an incision complex.

It localises to the cytoplasm. The UvrABC repair system catalyzes the recognition and processing of DNA lesions. A damage recognition complex composed of 2 UvrA and 2 UvrB subunits scans DNA for abnormalities. Upon binding of the UvrA(2)B(2) complex to a putative damaged site, the DNA wraps around one UvrB monomer. DNA wrap is dependent on ATP binding by UvrB and probably causes local melting of the DNA helix, facilitating insertion of UvrB beta-hairpin between the DNA strands. Then UvrB probes one DNA strand for the presence of a lesion. If a lesion is found the UvrA subunits dissociate and the UvrB-DNA preincision complex is formed. This complex is subsequently bound by UvrC and the second UvrB is released. If no lesion is found, the DNA wraps around the other UvrB subunit that will check the other stand for damage. This Caldicellulosiruptor bescii (strain ATCC BAA-1888 / DSM 6725 / KCTC 15123 / Z-1320) (Anaerocellum thermophilum) protein is UvrABC system protein B.